The following is a 123-amino-acid chain: Protein Wnt-7b (123 aa).

Serine 1 is lipidated: O-palmitoleoyl serine; by PORCN. The segment at 33 to 61 (VEVVRASRLRQPTFLKIKQIRSYQKPMET) is disordered linker. Cysteines 89 and 104 form a disulfide. An N-linked (GlcNAc...) asparagine glycan is attached at asparagine 90.

Belongs to the Wnt family. In terms of processing, palmitoleoylation is required for efficient binding to frizzled receptors. Depalmitoleoylation leads to Wnt signaling pathway inhibition.

The protein localises to the secreted. Its subcellular location is the extracellular space. It localises to the extracellular matrix. In terms of biological role, ligand for members of the frizzled family of seven transmembrane receptors that functions in the canonical Wnt/beta-catenin signaling pathway. Required for normal fusion of the chorion and the allantois during placenta development. Required for central nervous system (CNS) angiogenesis and blood-brain barrier regulation. In Sceloporus occidentalis (Western fence lizard), this protein is Protein Wnt-7b (WNT-7B).